The following is a 308-amino-acid chain: Probable 5-dehydro-4-deoxyglucarate dehydratase (308 aa).

Belongs to the DapA family.

It catalyses the reaction 5-dehydro-4-deoxy-D-glucarate + H(+) = 2,5-dioxopentanoate + CO2 + H2O. It functions in the pathway carbohydrate acid metabolism; D-glucarate degradation; 2,5-dioxopentanoate from D-glucarate: step 2/2. This chain is Probable 5-dehydro-4-deoxyglucarate dehydratase, found in Oceanobacillus iheyensis (strain DSM 14371 / CIP 107618 / JCM 11309 / KCTC 3954 / HTE831).